Here is a 364-residue protein sequence, read N- to C-terminus: Dihydroorotate dehydrogenase (quinone) (364 aa).

FMN is bound by residues 62-66 (AGFDK) and T86. K66 contributes to the substrate binding site. 111 to 115 (NRMGF) is a substrate binding site. Residues N142 and N175 each coordinate FMN. N175 is a binding site for substrate. S178 serves as the catalytic Nucleophile. Position 180 (N180) interacts with substrate. FMN-binding residues include K216 and T244. 245–246 (NT) is a binding site for substrate. FMN is bound by residues G267, G296, and 317–318 (YT).

This sequence belongs to the dihydroorotate dehydrogenase family. Type 2 subfamily. As to quaternary structure, monomer. FMN is required as a cofactor.

It is found in the cell membrane. The enzyme catalyses (S)-dihydroorotate + a quinone = orotate + a quinol. It functions in the pathway pyrimidine metabolism; UMP biosynthesis via de novo pathway; orotate from (S)-dihydroorotate (quinone route): step 1/1. Its function is as follows. Catalyzes the conversion of dihydroorotate to orotate with quinone as electron acceptor. This Anaeromyxobacter sp. (strain K) protein is Dihydroorotate dehydrogenase (quinone).